Here is a 132-residue protein sequence, read N- to C-terminus: Small ribosomal subunit protein uS11 (132 aa).

Belongs to the universal ribosomal protein uS11 family. In terms of assembly, part of the 30S ribosomal subunit. Interacts with proteins S7 and S18. Binds to IF-3.

Functionally, located on the platform of the 30S subunit, it bridges several disparate RNA helices of the 16S rRNA. Forms part of the Shine-Dalgarno cleft in the 70S ribosome. This chain is Small ribosomal subunit protein uS11, found in Clostridium kluyveri (strain NBRC 12016).